Here is an 80-residue protein sequence, read N- to C-terminus: Small, acid-soluble spore protein Tlp (80 aa).

The protein belongs to the Tlp family.

It is found in the spore core. The chain is Small, acid-soluble spore protein Tlp from Bacillus pumilus (strain SAFR-032).